A 122-amino-acid polypeptide reads, in one-letter code: Large ribosomal subunit protein uL14 (122 aa).

It belongs to the universal ribosomal protein uL14 family. Part of the 50S ribosomal subunit. Forms a cluster with proteins L3 and L19. In the 70S ribosome, L14 and L19 interact and together make contacts with the 16S rRNA in bridges B5 and B8.

Binds to 23S rRNA. Forms part of two intersubunit bridges in the 70S ribosome. This Xylella fastidiosa (strain 9a5c) protein is Large ribosomal subunit protein uL14.